Here is a 548-residue protein sequence, read N- to C-terminus: Chaperonin GroEL (548 aa).

ATP is bound by residues 30 to 33 (TLGP), Lys-51, 87 to 91 (DGTTT), Gly-415, 479 to 481 (NAA), and Asp-495.

The protein belongs to the chaperonin (HSP60) family. Forms a cylinder of 14 subunits composed of two heptameric rings stacked back-to-back. Interacts with the co-chaperonin GroES.

Its subcellular location is the cytoplasm. It catalyses the reaction ATP + H2O + a folded polypeptide = ADP + phosphate + an unfolded polypeptide.. Its function is as follows. Together with its co-chaperonin GroES, plays an essential role in assisting protein folding. The GroEL-GroES system forms a nano-cage that allows encapsulation of the non-native substrate proteins and provides a physical environment optimized to promote and accelerate protein folding. This Proteus mirabilis (strain HI4320) protein is Chaperonin GroEL.